A 155-amino-acid polypeptide reads, in one-letter code: Myelin basic protein (155 aa).

The tract at residues methionine 1–aspartate 72 is disordered. Residue alanine 2 is modified to N-acetylalanine; in forms C1, C2, C3 and C8. Deamidated glutamine; in forms C1, C2 and C3 is present on glutamine 12. Positions glycine 37–alanine 49 are enriched in basic and acidic residues. Phosphoserine; in forms C1, C2 and C3 occurs at positions 73 and 84. Residues arginine 113–arginine 155 form a disordered region. Phosphoserine; in forms C1 and C3 is present on residues serine 121 and serine 122. Residues lysine 123–glycine 134 are compositionally biased toward basic and acidic residues. 3 positions are modified to phosphoserine; in forms C1, C2 and C3: serine 135, serine 139, and serine 140.

It belongs to the myelin basic protein family. Post-translationally, several charge isomers are produced as a result of optional post-translational modifications, such as phosphorylation, deamidation and citrullination. Dogfish MBP contains four major components designated as C1, C2, C3 and C8. C1 and C3, but not C2 are phosphorylated at either Ser-121 or Ser-122; C2 is phosphorylated at 2 or 3 sites among Ser-135, Ser-139 and Ser-140. Hydroxyproline and citrulline are present but were not identified in either C1, C2 or C3, which suggests their presence in C8.

It is found in the myelin membrane. Functionally, this protein may function to maintain proper structure of myelin. The sequence is that of Myelin basic protein (MBP) from Squalus acanthias (Spiny dogfish).